A 95-amino-acid chain; its full sequence is MRQYEVMIIVDPSQDERTVAPSLDKYLNIVREEKGSVDKVDVWGKRRFEYPIQKKEEGVYIVLDLTCESDTVRELDRVLNLNDNVLRTKVLRKDK.

This sequence belongs to the bacterial ribosomal protein bS6 family.

Its function is as follows. Binds together with bS18 to 16S ribosomal RNA. This chain is Small ribosomal subunit protein bS6, found in Corynebacterium urealyticum (strain ATCC 43042 / DSM 7109).